A 368-amino-acid polypeptide reads, in one-letter code: Methionine import ATP-binding protein MetN (368 aa).

An ABC transporter domain is found at 5-260; it reads IELNNLSVQF…PKEALTKQFI (256 aa). Residue 41-48 coordinates ATP; the sequence is GYSGAGKS.

This sequence belongs to the ABC transporter superfamily. Methionine importer (TC 3.A.1.24) family. In terms of assembly, the complex is composed of two ATP-binding proteins (MetN), two transmembrane proteins (MetI) and a solute-binding protein (MetQ).

It localises to the cell membrane. The enzyme catalyses L-methionine(out) + ATP + H2O = L-methionine(in) + ADP + phosphate + H(+). It carries out the reaction D-methionine(out) + ATP + H2O = D-methionine(in) + ADP + phosphate + H(+). Its function is as follows. Part of the ABC transporter complex MetNIQ involved in methionine import. Responsible for energy coupling to the transport system. This Lactococcus lactis subsp. lactis (strain IL1403) (Streptococcus lactis) protein is Methionine import ATP-binding protein MetN.